Consider the following 74-residue polypeptide: Large ribosomal subunit protein bL31 (74 aa).

Zn(2+) is bound by residues cysteine 17, cysteine 19, cysteine 38, and cysteine 41.

It belongs to the bacterial ribosomal protein bL31 family. Type A subfamily. As to quaternary structure, part of the 50S ribosomal subunit. Zn(2+) is required as a cofactor.

Its function is as follows. Binds the 23S rRNA. The polypeptide is Large ribosomal subunit protein bL31 (Gloeobacter violaceus (strain ATCC 29082 / PCC 7421)).